The chain runs to 631 residues: Phosphomethylpyrimidine synthase (631 aa).

Substrate contacts are provided by residues asparagine 239, methionine 268, tyrosine 297, histidine 333, 353–355 (SRG), 394–397 (DGLR), and glutamate 433. Histidine 437 contacts Zn(2+). Tyrosine 460 is a substrate binding site. Histidine 501 is a binding site for Zn(2+). Residues cysteine 581, cysteine 584, and cysteine 589 each contribute to the [4Fe-4S] cluster site.

It belongs to the ThiC family. In terms of assembly, homodimer. It depends on [4Fe-4S] cluster as a cofactor.

It catalyses the reaction 5-amino-1-(5-phospho-beta-D-ribosyl)imidazole + S-adenosyl-L-methionine = 4-amino-2-methyl-5-(phosphooxymethyl)pyrimidine + CO + 5'-deoxyadenosine + formate + L-methionine + 3 H(+). It participates in cofactor biosynthesis; thiamine diphosphate biosynthesis. Its function is as follows. Catalyzes the synthesis of the hydroxymethylpyrimidine phosphate (HMP-P) moiety of thiamine from aminoimidazole ribotide (AIR) in a radical S-adenosyl-L-methionine (SAM)-dependent reaction. The chain is Phosphomethylpyrimidine synthase from Salmonella agona (strain SL483).